Consider the following 307-residue polypeptide: Acyl transferase (307 aa).

Catalysis depends on charge relay system residues S116, D213, and H243.

This sequence belongs to the LuxD family.

It participates in lipid metabolism; fatty acid reduction for biolumincescence. In terms of biological role, acyl transferase is part of the fatty acid reductase system required for aldehyde biosynthesis; it produces fatty acids for the luminescent reaction. The protein is Acyl transferase of Photorhabdus laumondii subsp. laumondii (strain DSM 15139 / CIP 105565 / TT01) (Photorhabdus luminescens subsp. laumondii).